Consider the following 107-residue polypeptide: UPF0145 protein Sfri_2095 (107 aa).

The protein belongs to the UPF0145 family.

In Shewanella frigidimarina (strain NCIMB 400), this protein is UPF0145 protein Sfri_2095.